A 514-amino-acid chain; its full sequence is Alpha-amylase (514 aa).

The N-terminal stretch at Met-1 to Ala-31 is a signal peptide. Residues Asn-133, Asp-190, Ala-212, Asp-214, Asp-225, Asp-231, Asp-233, and Asp-235 each contribute to the Ca(2+) site. Asp-190 contacts Na(+). 3 residues coordinate Na(+): Asp-214, Asp-225, and Asp-231. The active-site Nucleophile is the Asp-262. Residue His-266 coordinates Ca(2+). Residue Glu-292 is the Proton donor of the active site. Residues Gly-331, Asp-438, and Asp-461 each coordinate Ca(2+).

Belongs to the glycosyl hydrolase 13 family. In terms of assembly, monomer. Requires Ca(2+) as cofactor. Na(+) serves as cofactor.

It is found in the secreted. It carries out the reaction Endohydrolysis of (1-&gt;4)-alpha-D-glucosidic linkages in polysaccharides containing three or more (1-&gt;4)-alpha-linked D-glucose units.. This Bacillus amyloliquefaciens (Bacillus velezensis) protein is Alpha-amylase.